A 644-amino-acid chain; its full sequence is SPbeta prophage-derived uncharacterized protein YomE (644 aa).

In Bacillus subtilis (strain 168), this protein is SPbeta prophage-derived uncharacterized protein YomE (yomE).